The chain runs to 175 residues: Co-chaperone protein HscB homolog (175 aa).

One can recognise a J domain in the interval 7–79 (SHFALFNLPE…LKRARYLLSL (73 aa)).

This sequence belongs to the HscB family. Interacts with HscA and stimulates its ATPase activity.

Functionally, co-chaperone involved in the maturation of iron-sulfur cluster-containing proteins. Seems to help targeting proteins to be folded toward HscA. In Paraburkholderia phymatum (strain DSM 17167 / CIP 108236 / LMG 21445 / STM815) (Burkholderia phymatum), this protein is Co-chaperone protein HscB homolog.